The chain runs to 78 residues: Small ribosomal subunit protein bS18 (78 aa).

This sequence belongs to the bacterial ribosomal protein bS18 family. As to quaternary structure, part of the 30S ribosomal subunit. Forms a tight heterodimer with protein bS6.

Binds as a heterodimer with protein bS6 to the central domain of the 16S rRNA, where it helps stabilize the platform of the 30S subunit. The chain is Small ribosomal subunit protein bS18 from Lactobacillus delbrueckii subsp. bulgaricus (strain ATCC 11842 / DSM 20081 / BCRC 10696 / JCM 1002 / NBRC 13953 / NCIMB 11778 / NCTC 12712 / WDCM 00102 / Lb 14).